The following is a 198-amino-acid chain: Probable GTP-binding protein EngB (198 aa).

The region spanning 21 to 195 (NFSEVAFLGR…EDIIINQTLG (175 aa)) is the EngB-type G domain. Residues 29–36 (GRSNVGKS), 56–60 (GKTQL), 81–84 (DLPG), 151–154 (TKCD), and 174–176 (VSN) each bind GTP. Serine 36 and threonine 58 together coordinate Mg(2+).

Belongs to the TRAFAC class TrmE-Era-EngA-EngB-Septin-like GTPase superfamily. EngB GTPase family. Mg(2+) serves as cofactor.

Functionally, necessary for normal cell division and for the maintenance of normal septation. In Campylobacter jejuni (strain RM1221), this protein is Probable GTP-binding protein EngB.